A 183-amino-acid polypeptide reads, in one-letter code: Proton-transporting V-type ATPase complex assembly regulator TMEM9 (183 aa).

Residues 1–20 (MKLLCLVAVVGCLLVPPAQA) form the signal peptide. N-linked (GlcNAc...) asparagine glycans are attached at residues asparagine 21, asparagine 38, and asparagine 47. At 21-89 (NKSSEDIRCK…YEERSTTTIK (69 aa)) the chain is on the extracellular side. Residues 90–110 (VIIVIYLSVVGALLLYMAFLM) form a helical membrane-spanning segment. At 111 to 183 (LVDPLIRKPD…TVFDRHKMLS (73 aa)) the chain is on the cytoplasmic side. Phosphoserine is present on serine 144.

It belongs to the TMEM9 family. As to quaternary structure, interacts with the v-ATPase accessory protein ATP6AP2 and with the v-ATPase complex subunit ATP6V0D1; these interactions lead to the assembly of the v-ATPase complex. In terms of processing, N-glycosylated. As to expression, expressed in heart, lung, kidney, liver and intestines. Enriched in the hepatocytes around the central vein.

The protein localises to the lysosome membrane. The protein resides in the late endosome membrane. Its subcellular location is the endosome. It is found in the multivesicular body membrane. Transmembrane protein that binds to and facilitates the assembly of lysosomal proton-transporting V-type ATPase (v-ATPase), resulting in enhanced lysosomal acidification and trafficking. By bringing the v-ATPase accessory protein ATP6AP2 and the v-ATPase subunit ATP6V0D1 together, allows v-ATPase complex formation and activation. TMEM9-controlled vesicular acidification induces hyperactivation of Wnt/beta-catenin signaling, involved in development, tissue homeostasis and tissue regeneration, through lysosomal degradation of adenomatous polyposis coli/APC. In the liver, involved in hepatic regeneration. The protein is Proton-transporting V-type ATPase complex assembly regulator TMEM9 of Mus musculus (Mouse).